Consider the following 404-residue polypeptide: Cysteine desulfurase IscS (404 aa).

Pyridoxal 5'-phosphate contacts are provided by residues 75–76 (AT), N155, Q183, and 203–205 (TSH). Position 206 is an N6-(pyridoxal phosphate)lysine (K206). T243 contributes to the pyridoxal 5'-phosphate binding site. C328 functions as the Cysteine persulfide intermediate in the catalytic mechanism. C328 is a [2Fe-2S] cluster binding site.

Belongs to the class-V pyridoxal-phosphate-dependent aminotransferase family. NifS/IscS subfamily. In terms of assembly, homodimer. Forms a heterotetramer with IscU, interacts with other sulfur acceptors. Requires pyridoxal 5'-phosphate as cofactor.

The protein localises to the cytoplasm. The enzyme catalyses (sulfur carrier)-H + L-cysteine = (sulfur carrier)-SH + L-alanine. Its pathway is cofactor biosynthesis; iron-sulfur cluster biosynthesis. Its function is as follows. Master enzyme that delivers sulfur to a number of partners involved in Fe-S cluster assembly, tRNA modification or cofactor biosynthesis. Catalyzes the removal of elemental sulfur atoms from cysteine to produce alanine. Functions as a sulfur delivery protein for Fe-S cluster synthesis onto IscU, an Fe-S scaffold assembly protein, as well as other S acceptor proteins. This Photobacterium profundum (strain SS9) protein is Cysteine desulfurase IscS.